The primary structure comprises 65 residues: Large ribosomal subunit protein bL31 (65 aa).

Positions 16, 18, 36, and 39 each coordinate Zn(2+).

It belongs to the bacterial ribosomal protein bL31 family. Type A subfamily. Part of the 50S ribosomal subunit. Requires Zn(2+) as cofactor.

Functionally, binds the 23S rRNA. This chain is Large ribosomal subunit protein bL31, found in Campylobacter jejuni subsp. doylei (strain ATCC BAA-1458 / RM4099 / 269.97).